A 63-amino-acid chain; its full sequence is Bowman-Birk type proteinase inhibitor B-II (63 aa).

7 disulfides stabilise this stretch: Cys5–Cys62, Cys6–Cys23, Cys9–Cys57, Cys11–Cys21, Cys30–Cys37, Cys34–Cys49, and Cys39–Cys47.

Belongs to the Bowman-Birk serine protease inhibitor family.

The protein is Bowman-Birk type proteinase inhibitor B-II of Arachis hypogaea (Peanut).